The chain runs to 172 residues: Urease accessory protein UreE (172 aa).

It belongs to the UreE family.

It localises to the cytoplasm. Involved in urease metallocenter assembly. Binds nickel. Probably functions as a nickel donor during metallocenter assembly. In Shewanella halifaxensis (strain HAW-EB4), this protein is Urease accessory protein UreE.